Here is a 377-residue protein sequence, read N- to C-terminus: N-acetyldiaminopimelate deacetylase (377 aa).

Aspartate 69 is an active-site residue. Glutamate 128 (proton acceptor) is an active-site residue.

The protein belongs to the peptidase M20A family. N-acetyldiaminopimelate deacetylase subfamily.

It catalyses the reaction N-acetyl-(2S,6S)-2,6-diaminopimelate + H2O = (2S,6S)-2,6-diaminopimelate + acetate. Its pathway is amino-acid biosynthesis; L-lysine biosynthesis via DAP pathway; LL-2,6-diaminopimelate from (S)-tetrahydrodipicolinate (acetylase route): step 3/3. Catalyzes the conversion of N-acetyl-diaminopimelate to diaminopimelate and acetate. This chain is N-acetyldiaminopimelate deacetylase, found in Streptococcus gordonii (strain Challis / ATCC 35105 / BCRC 15272 / CH1 / DL1 / V288).